The following is a 228-amino-acid chain: 5'-methylthioadenosine/S-adenosylhomocysteine nucleosidase (228 aa).

Catalysis depends on E11, which acts as the Proton acceptor. Residues G77, I151, and 172-173 contribute to the substrate site; that span reads ME. D196 (proton donor) is an active-site residue.

The protein belongs to the PNP/UDP phosphorylase family. MtnN subfamily.

It catalyses the reaction S-adenosyl-L-homocysteine + H2O = S-(5-deoxy-D-ribos-5-yl)-L-homocysteine + adenine. It carries out the reaction S-methyl-5'-thioadenosine + H2O = 5-(methylsulfanyl)-D-ribose + adenine. The catalysed reaction is 5'-deoxyadenosine + H2O = 5-deoxy-D-ribose + adenine. The protein operates within amino-acid biosynthesis; L-methionine biosynthesis via salvage pathway; S-methyl-5-thio-alpha-D-ribose 1-phosphate from S-methyl-5'-thioadenosine (hydrolase route): step 1/2. In terms of biological role, catalyzes the irreversible cleavage of the glycosidic bond in both 5'-methylthioadenosine (MTA) and S-adenosylhomocysteine (SAH/AdoHcy) to adenine and the corresponding thioribose, 5'-methylthioribose and S-ribosylhomocysteine, respectively. Also cleaves 5'-deoxyadenosine, a toxic by-product of radical S-adenosylmethionine (SAM) enzymes, into 5-deoxyribose and adenine. This chain is 5'-methylthioadenosine/S-adenosylhomocysteine nucleosidase, found in Staphylococcus haemolyticus (strain JCSC1435).